The chain runs to 258 residues: ProSAAS (258 aa).

Positions 1–33 (MAGSPLLCGPRAGGVGILVLLLLGLLRLPPTLS) are cleaved as a signal peptide. The tract at residues 34-213 (ARPVKEPRSL…SSEPEAAPAP (180 aa)) is proSAAS(1-180). Disordered regions lie at residues 156 to 188 (PAPAAAPRPRPPVYDDGPTGPDVEDAGDETPDV), 204 to 230 (SSEPEAAPAPRRLRRSVDQDLGPEVPP), and 239 to 258 (RVKRLENPSPQAPARRLLPP). Residues 177-188 (DVEDAGDETPDV) are compositionally biased toward acidic residues. The segment covering 204–213 (SSEPEAAPAP) has biased composition (low complexity). The C-terminal inhibitory domain; interacts with PCSK1 stretch occupies residues 219-258 (SVDQDLGPEVPPENVLGALLRVKRLENPSPQAPARRLLPP). Positions 237–242 (LLRVKR) match the Sufficient for inhibition of PCSK1 motif.

In terms of assembly, interacts via the C-terminal inhibitory domain with PCSK1 66 kDa form. Post-translationally, proteolytically cleaved in the Golgi. Little SAAS, PEN, PEN-20 and Big LEN are the major processed peptides in proSAAS-overexpressing AtT-20 pituitary corticotropic cell line. In terms of tissue distribution, expressed in brain (mostly hypothalamus and pituitary) and gut. Expressed in trigeminal ganglia and neuroendocrine cell lines. Expressed in pancreas, spinal cord and brain (most abundant in striatum, hippocampus, pons and medulla, and cortex) (at protein level).

It is found in the secreted. Its subcellular location is the golgi apparatus. The protein resides in the trans-Golgi network. In terms of biological role, may function in the control of the neuroendocrine secretory pathway. Proposed be a specific endogenous inhibitor of PCSK1. ProSAAS and Big PEN-LEN, both containing the C-terminal inhibitory domain, but not the processed peptides reduce PCSK1 activity in the endoplasmic reticulum and Golgi. It reduces the activity of the 87 kDa form but not the autocatalytically derived 66 kDa form of PCSK1. Subsequent processing of proSAAS may eliminate the inhibition. Slows down convertase-mediated processing of proopiomelanocortin and proenkephalin. May control the intracellular timing of PCSK1 rather than its total level of activity. Endogenous ligand for GPR171. Neuropeptide involved in the regulation of feeding. Its function is as follows. Endogenous ligand for GPR171. Neuropeptide involved in the regulation of feeding. The sequence is that of ProSAAS (Pcsk1n) from Mus musculus (Mouse).